A 150-amino-acid polypeptide reads, in one-letter code: Peptide methionine sulfoxide reductase MsrB (150 aa).

A MsrB domain is found at 9 to 132 (EAELKRTLTK…NSAALKFIPF (124 aa)). Catalysis depends on Cys-121, which acts as the Nucleophile.

The protein belongs to the MsrB Met sulfoxide reductase family.

It catalyses the reaction L-methionyl-[protein] + [thioredoxin]-disulfide + H2O = L-methionyl-(R)-S-oxide-[protein] + [thioredoxin]-dithiol. This is Peptide methionine sulfoxide reductase MsrB from Mycoplasma genitalium (strain ATCC 33530 / DSM 19775 / NCTC 10195 / G37) (Mycoplasmoides genitalium).